The following is a 248-amino-acid chain: Triosephosphate isomerase (248 aa).

9–11 (NWK) is a binding site for substrate. Histidine 95 serves as the catalytic Electrophile. Glutamate 166 (proton acceptor) is an active-site residue. Substrate-binding positions include glycine 172, serine 210, and 231 to 232 (GG).

Belongs to the triosephosphate isomerase family. As to quaternary structure, homodimer.

It localises to the cytoplasm. It carries out the reaction D-glyceraldehyde 3-phosphate = dihydroxyacetone phosphate. Its pathway is carbohydrate biosynthesis; gluconeogenesis. It participates in carbohydrate degradation; glycolysis; D-glyceraldehyde 3-phosphate from glycerone phosphate: step 1/1. In terms of biological role, involved in the gluconeogenesis. Catalyzes stereospecifically the conversion of dihydroxyacetone phosphate (DHAP) to D-glyceraldehyde-3-phosphate (G3P). The polypeptide is Triosephosphate isomerase (Delftia acidovorans (strain DSM 14801 / SPH-1)).